A 112-amino-acid chain; its full sequence is Large ribosomal subunit protein eL31 (112 aa).

Belongs to the eukaryotic ribosomal protein eL31 family. As to quaternary structure, component of the large ribosomal subunit. Mature ribosomes consist of a small (40S) and a large (60S) subunit. The 40S subunit contains about 32 different proteins and 1 molecule of RNA (18S). The 60S subunit contains 45 different proteins and 3 molecules of RNA (25S, 5.8S and 5S).

The protein resides in the cytoplasm. Its function is as follows. Component of the ribosome, a large ribonucleoprotein complex responsible for the synthesis of proteins in the cell. The small ribosomal subunit (SSU) binds messenger RNAs (mRNAs) and translates the encoded message by selecting cognate aminoacyl-transfer RNA (tRNA) molecules. The large subunit (LSU) contains the ribosomal catalytic site termed the peptidyl transferase center (PTC), which catalyzes the formation of peptide bonds, thereby polymerizing the amino acids delivered by tRNAs into a polypeptide chain. The nascent polypeptides leave the ribosome through a tunnel in the LSU and interact with protein factors that function in enzymatic processing, targeting, and the membrane insertion of nascent chains at the exit of the ribosomal tunnel. This Candida albicans (strain SC5314 / ATCC MYA-2876) (Yeast) protein is Large ribosomal subunit protein eL31.